A 230-amino-acid polypeptide reads, in one-letter code: MGQKVNPKGIRLGIIKDWDSKWYASSKDYSKYLLSDIKVRNYLFKKLINASVSRVQIGRLVNNAKVTIYTARPGIVIGKKGADIEQLKLIVSKMMGIPVHINIEEIKKPELDARLVAENIAQQLEKRVMYRRAVKRVLGNATRLGAQGIKVMVSGRLNGAEIARSEWYREGRVPLHTFRADVDYSSYGAKTQYGVIGIKVWIFKGEILDHKKGTLDEVAHRGAINQIAKK.

The region spanning 39–107 (VRNYLFKKLI…PVHINIEEIK (69 aa)) is the KH type-2 domain.

It belongs to the universal ribosomal protein uS3 family. Part of the 30S ribosomal subunit. Forms a tight complex with proteins S10 and S14.

Functionally, binds the lower part of the 30S subunit head. Binds mRNA in the 70S ribosome, positioning it for translation. In Vesicomyosocius okutanii subsp. Calyptogena okutanii (strain HA), this protein is Small ribosomal subunit protein uS3.